Reading from the N-terminus, the 382-residue chain is Homoserine O-acetyltransferase (382 aa).

One can recognise an AB hydrolase-1 domain in the interval asparagine 50–aspartate 360. Residue serine 155 is the Nucleophile of the active site. Substrate is bound at residue arginine 225. Catalysis depends on residues aspartate 321 and histidine 354. A substrate-binding site is contributed by aspartate 355.

Belongs to the AB hydrolase superfamily. MetX family. Homodimer.

It is found in the cytoplasm. It catalyses the reaction L-homoserine + acetyl-CoA = O-acetyl-L-homoserine + CoA. It participates in amino-acid biosynthesis; L-methionine biosynthesis via de novo pathway; O-acetyl-L-homoserine from L-homoserine: step 1/1. Its function is as follows. Transfers an acetyl group from acetyl-CoA to L-homoserine, forming acetyl-L-homoserine. The polypeptide is Homoserine O-acetyltransferase (Caulobacter vibrioides (strain ATCC 19089 / CIP 103742 / CB 15) (Caulobacter crescentus)).